Here is a 557-residue protein sequence, read N- to C-terminus: TBCC domain-containing protein 1 (557 aa).

In terms of domain architecture, C-CAP/cofactor C-like spans 290–435 (TTKRAKIACN…LEDHMARTGL (146 aa)).

Belongs to the TBCC family.

The protein resides in the cytoplasm. The protein localises to the cytoskeleton. It is found in the microtubule organizing center. It localises to the centrosome. Its subcellular location is the spindle pole. Its function is as follows. Plays a role in the regulation of centrosome and Golgi apparatus positioning, with consequences on cell shape and cell migration. This is TBCC domain-containing protein 1 (TBCCD1) from Bos taurus (Bovine).